A 141-amino-acid chain; its full sequence is uncharacterized protein (141 aa).

Residues 1-61 form a disordered region; sequence IRLLHSLTPP…PPPPPPPRRA (61 aa). Residues 8–58 are compositionally biased toward pro residues; the sequence is TPPPPPPPPPPPPPPPPPPPPPPPPPPPPPPPPPPPPPPPPPPPPPPPPPP. The H-T-H motif DNA-binding region spans 98-116; the sequence is KRLLVAYPVRHFLSAACQF.

This is an uncharacterized protein from Owenia fusiformis (Polychaete worm).